The following is a 187-amino-acid chain: Large ribosomal subunit protein uL5 (187 aa).

Belongs to the universal ribosomal protein uL5 family. As to quaternary structure, part of the 50S ribosomal subunit; part of the 5S rRNA/L5/L18/L25 subcomplex. Contacts the 5S rRNA and the P site tRNA. Forms a bridge to the 30S subunit in the 70S ribosome.

Its function is as follows. This is one of the proteins that bind and probably mediate the attachment of the 5S RNA into the large ribosomal subunit, where it forms part of the central protuberance. In the 70S ribosome it contacts protein S13 of the 30S subunit (bridge B1b), connecting the 2 subunits; this bridge is implicated in subunit movement. Contacts the P site tRNA; the 5S rRNA and some of its associated proteins might help stabilize positioning of ribosome-bound tRNAs. This chain is Large ribosomal subunit protein uL5, found in Ruegeria sp. (strain TM1040) (Silicibacter sp.).